Consider the following 466-residue polypeptide: RUS family member 1 (466 aa).

A2 is modified (N-acetylalanine). A helical membrane pass occupies residues 245-265 (LLMLPLVSDCPSLSLGCFVLL).

It belongs to the RUS1 family.

The protein resides in the membrane. This is RUS family member 1 from Mus musculus (Mouse).